We begin with the raw amino-acid sequence, 120 residues long: NAD(P)H-quinone oxidoreductase subunit 3, chloroplastic (120 aa).

The next 3 helical transmembrane spans lie at 10 to 30, 64 to 84, and 89 to 109; these read FLVF…ASKL, MFAL…PWAV, and MGFI…VGLV.

Belongs to the complex I subunit 3 family. NDH is composed of at least 16 different subunits, 5 of which are encoded in the nucleus.

Its subcellular location is the plastid. The protein resides in the chloroplast thylakoid membrane. It catalyses the reaction a plastoquinone + NADH + (n+1) H(+)(in) = a plastoquinol + NAD(+) + n H(+)(out). The enzyme catalyses a plastoquinone + NADPH + (n+1) H(+)(in) = a plastoquinol + NADP(+) + n H(+)(out). In terms of biological role, NDH shuttles electrons from NAD(P)H:plastoquinone, via FMN and iron-sulfur (Fe-S) centers, to quinones in the photosynthetic chain and possibly in a chloroplast respiratory chain. The immediate electron acceptor for the enzyme in this species is believed to be plastoquinone. Couples the redox reaction to proton translocation, and thus conserves the redox energy in a proton gradient. In Chlorokybus atmophyticus (Soil alga), this protein is NAD(P)H-quinone oxidoreductase subunit 3, chloroplastic.